Here is a 25-residue protein sequence, read N- to C-terminus: SPbeta prophage-derived uncharacterized protein YotF (25 aa).

The sequence is that of SPbeta prophage-derived uncharacterized protein YotF (yotF) from Bacillus subtilis (strain 168).